The chain runs to 843 residues: Neuroligin-1 (843 aa).

An N-terminal signal peptide occupies residues 1 to 45; that stretch reads MALPRCMWPNYVWRAMMACVVHRGSGAPLTLCLLGCLLQTFHVLS. Topologically, residues 46–697 are extracellular; that stretch reads QKLDDVDPLV…DQRDYSTELS (652 aa). N-linked (GlcNAc...) (complex) asparagine glycosylation occurs at asparagine 109. 2 cysteine pairs are disulfide-bonded: cysteine 117–cysteine 153 and cysteine 172–cysteine 181. Asparagine 303 and asparagine 343 each carry an N-linked (GlcNAc...) (complex) asparagine glycan. 2 disulfides stabilise this stretch: cysteine 342–cysteine 353 and cysteine 512–cysteine 546. Residue asparagine 547 is glycosylated (N-linked (GlcNAc...) asparagine). The interval 647-688 is disordered; it reads TKVPSTDITLRPTRKNSTPVTSAFPTAKQDDPKQQPSPFSVD. Over residues 661–670 the composition is skewed to polar residues; it reads KNSTPVTSAF. O-linked (GalNAc...) serine glycans are attached at residues serine 683 and serine 686. Residues 698–718 traverse the membrane as a helical segment; the sequence is VTIAVGASLLFLNILAFAALY. At 719-843 the chain is on the cytoplasmic side; that stretch reads YKKDKRRHDV…HPHSHSTTRV (125 aa). The interval 822–843 is disordered; the sequence is GGQNNTLPHPHPHPHSHSTTRV. A compositionally biased stretch (basic residues) spans 831 to 843; sequence PHPHPHSHSTTRV.

It belongs to the type-B carboxylesterase/lipase family. Interacts with neurexins NRXN1, NRXN2 and NRXN3. Interaction with neurexins is mediated by heparan sulfate glycan modification on neurexin. Interacts with NLGN3. Interacts (via its C-terminus) with DLG4/PSD-95 (via PDZ domain 3). Interacts with GOPC. Interacts with AIP1 and PDZRN3. In terms of processing, the N-terminus is blocked. Expressed in brain, almost exclusively in neurons, and spinal cord. Detected in pancreas islet beta cells.

The protein localises to the cell membrane. It is found in the postsynaptic density. It localises to the synaptic cleft. The protein resides in the synaptic cell membrane. Its function is as follows. Cell surface protein involved in cell-cell-interactions via its interactions with neurexin family members. Plays a role in synapse function and synaptic signal transmission, and probably mediates its effects by recruiting and clustering other synaptic proteins. May promote the initial formation of synapses, but is not essential for this. In vitro, triggers the de novo formation of presynaptic structures. May be involved in specification of excitatory synapses. Required to maintain wakefulness quality and normal synchrony of cerebral cortex activity during wakefulness and sleep. The protein is involved in nervous system development. This chain is Neuroligin-1 (Nlgn1), found in Rattus norvegicus (Rat).